The primary structure comprises 639 residues: Chaperone protein DnaK (639 aa).

A Phosphothreonine; by autocatalysis modification is found at Thr198. The tract at residues 601–639 (AQQAPGADSCGGDCGQQQEAGAKPKDEKVVDADFEEVKK) is disordered. Residues 622–639 (AKPKDEKVVDADFEEVKK) are compositionally biased toward basic and acidic residues.

The protein belongs to the heat shock protein 70 family.

In terms of biological role, acts as a chaperone. This Trichlorobacter lovleyi (strain ATCC BAA-1151 / DSM 17278 / SZ) (Geobacter lovleyi) protein is Chaperone protein DnaK.